A 312-amino-acid chain; its full sequence is Phospholipid phosphatase 3 (312 aa).

The Cytoplasmic portion of the chain corresponds to 1–33 (MQSYKYDKAIVPESKNGGSPALNNNPRKGGSKR). Serine 19 is modified (phosphoserine). A helical membrane pass occupies residues 34–54 (VLLICLDLFCLFMAALPFLII). Residues 55-85 (ETSTIKPYRRGFYCNDESIKYPLKVSETIND) are Extracellular-facing. Residues 86 to 106 (AVLCAVGIVIAILRIITGEFY) form a helical membrane-spanning segment. The Cytoplasmic segment spans residues 107–123 (RIYYLKEKSRSTIQNPY). The short motif at 109-110 (YY) is the Dityrosine basolateral targeting motif element. The chain crosses the membrane as a helical span at residues 124–144 (VAALYKQVGCFLFGCAISQSF). Over 145-194 (TDIAKVSIGRLRPHFLSVCDPDFSQINCSEGYIQNYRCRGEDSKVQEARK) the chain is Extracellular. A phosphatase sequence motif I region spans residues 149–157 (KVSIGRLRP). N-linked (GlcNAc...) asparagine glycosylation is present at asparagine 171. Residues 183 to 185 (RGE) carry the Integrin-binding motif motif. Residues 195-215 (SFFSGHASFSMFTMLYLVLYL) traverse the membrane as a helical segment. The segment at 197–200 (FSGH) is phosphatase sequence motif II. The active-site Proton donors is histidine 200. Residues 216–226 (QARFTWRGARL) lie on the Cytoplasmic side of the membrane. A helical membrane pass occupies residues 227–244 (LRPLLQFTLLMMAFYTGL). The interval 245–256 (SRVSDYKHHPSD) is phosphatase sequence motif III. At 245 to 258 (SRVSDYKHHPSDVL) the chain is on the extracellular side. The active-site Nucleophile is the histidine 252. The helical transmembrane segment at 259–279 (AGFAQGALVACCIVFFVSDLF) threads the bilayer. Positions 276–312 (SDLFKTKTTLSLPAPAIRREILSPVDIMDRSNHHNMV) are mediates interaction with CTNND1. Topologically, residues 280–312 (KTKTTLSLPAPAIRREILSPVDIMDRSNHHNMV) are cytoplasmic.

The protein belongs to the PA-phosphatase related phosphoesterase family. In terms of assembly, forms functional homodimers and homooligomers that are not required for substrate recognition and catalytic activity. Can also form heterooligomers with other PLPP2 and PLPP3. Interacts with CTNND1; negatively regulates the PLPP3-mediated stabilization of beta-catenin/CTNNB1. N-glycosylated. Contains high-mannose oligosaccharides. As to expression, detected in epithelial cells of intestinal mucosa, lung, liver and brain.

Its subcellular location is the cell membrane. The protein resides in the basolateral cell membrane. The protein localises to the endoplasmic reticulum membrane. It is found in the endoplasmic reticulum-Golgi intermediate compartment membrane. It localises to the golgi apparatus membrane. Its subcellular location is the golgi apparatus. The protein resides in the trans-Golgi network membrane. The protein localises to the membrane raft. The catalysed reaction is a 1,2-diacyl-sn-glycero-3-phosphate + H2O = a 1,2-diacyl-sn-glycerol + phosphate. It catalyses the reaction 1,2-dihexadecanoyl-sn-glycero-3-phosphate + H2O = 1,2-dihexadecanoyl-sn-glycerol + phosphate. It carries out the reaction 1,2-di-(9Z-octadecenoyl)-sn-glycero-3-phosphate + H2O = 1,2-di-(9Z-octadecenoyl)-sn-glycerol + phosphate. The enzyme catalyses a monoacyl-sn-glycero-3-phosphate + H2O = a monoacylglycerol + phosphate. The catalysed reaction is (9Z)-octadecenoyl-sn-glycero-3-phosphate + H2O = (9Z-octadecenoyl)-glycerol + phosphate. It catalyses the reaction sphing-4-enine 1-phosphate + H2O = sphing-4-enine + phosphate. It carries out the reaction an N-acylsphing-4-enine 1-phosphate + H2O = an N-acylsphing-4-enine + phosphate. The enzyme catalyses N-(octanoyl)-sphing-4-enine-1-phosphate + H2O = N-octanoylsphing-4-enine + phosphate. The catalysed reaction is N-(9Z-octadecenoyl)-ethanolamine phosphate + H2O = N-(9Z-octadecenoyl) ethanolamine + phosphate. It participates in lipid metabolism; phospholipid metabolism. Magnesium-independent phospholipid phosphatase. Insensitive to N-ethylmaleimide. Inhibited by sphingosine, zinc ions and modestly by propanolol. Functionally, magnesium-independent phospholipid phosphatase of the plasma membrane that catalyzes the dephosphorylation of a variety of glycerolipid and sphingolipid phosphate esters including phosphatidate/PA, lysophosphatidate/LPA, diacylglycerol pyrophosphate/DGPP, sphingosine 1-phosphate/S1P and ceramide 1-phosphate/C1P. Also acts on N-oleoyl ethanolamine phosphate/N-(9Z-octadecenoyl)-ethanolamine phosphate, a potential physiological compound. Has both an extracellular and an intracellular phosphatase activity, allowing the hydrolysis and the cellular uptake of these bioactive lipid mediators from the milieu, regulating signal transduction in different cellular processes. Through the dephosphorylation of extracellular sphingosine-1-phosphate and the regulation of its extra- and intracellular availability, plays a role in vascular homeostasis, regulating endothelial cell migration, adhesion, survival, proliferation and the production of pro-inflammatory cytokines. By maintaining the appropriate levels of this lipid in the cerebellum, also ensure its proper development and function. Through its intracellular lipid phosphatase activity may act in early compartments of the secretory pathway, regulating the formation of Golgi to endoplasmic reticulum retrograde transport carriers. Its function is as follows. Independently of this phosphatase activity may also function in the Wnt signaling pathway and the stabilization of beta-catenin/CTNNB1, thereby regulating cell proliferation, migration and differentiation in angiogenesis or yet in tumor growth. Also plays a role in integrin-mediated cell-cell adhesion in angiogenesis. The protein is Phospholipid phosphatase 3 of Rattus norvegicus (Rat).